The following is a 511-amino-acid chain: UDP-N-acetylmuramoyl-L-alanyl-D-glutamate--2,6-diaminopimelate ligase (511 aa).

S33 serves as a coordination point for UDP-N-acetyl-alpha-D-muramoyl-L-alanyl-D-glutamate. 118 to 124 (GTNGKTT) is an ATP binding site. Residues 160–161 (TT), S187, Q193, and R195 contribute to the UDP-N-acetyl-alpha-D-muramoyl-L-alanyl-D-glutamate site. At K227 the chain carries N6-carboxylysine. Meso-2,6-diaminopimelate contacts are provided by residues R403, 427–430 (DNPR), G478, and E482. The short motif at 427-430 (DNPR) is the Meso-diaminopimelate recognition motif element.

It belongs to the MurCDEF family. MurE subfamily. The cofactor is Mg(2+). Carboxylation is probably crucial for Mg(2+) binding and, consequently, for the gamma-phosphate positioning of ATP.

It is found in the cytoplasm. The enzyme catalyses UDP-N-acetyl-alpha-D-muramoyl-L-alanyl-D-glutamate + meso-2,6-diaminopimelate + ATP = UDP-N-acetyl-alpha-D-muramoyl-L-alanyl-gamma-D-glutamyl-meso-2,6-diaminopimelate + ADP + phosphate + H(+). The protein operates within cell wall biogenesis; peptidoglycan biosynthesis. Catalyzes the addition of meso-diaminopimelic acid to the nucleotide precursor UDP-N-acetylmuramoyl-L-alanyl-D-glutamate (UMAG) in the biosynthesis of bacterial cell-wall peptidoglycan. The chain is UDP-N-acetylmuramoyl-L-alanyl-D-glutamate--2,6-diaminopimelate ligase from Prochlorococcus marinus subsp. pastoris (strain CCMP1986 / NIES-2087 / MED4).